Reading from the N-terminus, the 536-residue chain is MATPDAGLPGAEGVEPAPWAQLEAPARLLLQALQAGPEGARRGLGVLRALGSRGWEPFDWGRLLEALCREEPVVQGPDGRLELKPLLLRLPRICQRNLMSLLMAVRPSLPESGLLSVLQIAQQDLAPDPDAWLRALGELLRRDLGVGTSMEGASPLSERCQRQLQSLCRGLGLGGRRLKSPQAPDPEEEENRDSQQPGKRRKDSEEEAASPEGKRVPKRLRCWEEEEDHEKERPEHKSLESLADGGSASPIKDQPVMAVKTGEDGSNLDDAKGLAESLELPKAIQDQLPRLQQLLKTLEEGLEGLEDAPPVELQLLHECSPSQMDLLCAQLQLPQLSDLGLLRLCTWLLALSPDLSLSNATVLTRSLFLGRILSLTSSASRLLTTALTSFCAKYTYPVCSALLDPVLQAPGTGPAQTELLCCLVKMESLEPDAQVLMLGQILELPWKEETFLVLQSLLERQVEMTPEKFSVLMEKLCKKGLAATTSMAYAKLMLTVMTKYQANITETQRLGLAMALEPNTTFLRKSLKAALKHLGP.

The interval 150–371 (MEGASPLSER…VLTRSLFLGR (222 aa)) is interaction with FANCC. The tract at residues 171–252 (LGLGGRRLKS…ADGGSASPIK (82 aa)) is disordered. Positions 230 to 239 (EKERPEHKSL) are enriched in basic and acidic residues. S249 is modified (phosphoserine). T346 is subject to Phosphothreonine; by CHEK1. Phosphoserine; by CHEK1 is present on S374.

In terms of assembly, belongs to the multisubunit FA complex composed of FANCA, FANCB, FANCC, FANCE, FANCF, FANCG, FANCL/PHF9 and FANCM. The complex is not found in FA patients. Interacts with FANCC and FANCD2. Post-translationally, phosphorylated. Phosphorylation by CHEK1 at Thr-346 and Ser-374 regulates its function in DNA cross-links repair. Ubiquitinated. Phosphorylation by CHEK1 induces polyubiquitination and degradation.

It is found in the nucleus. Functionally, as part of the Fanconi anemia (FA) complex functions in DNA cross-links repair. Required for the nuclear accumulation of FANCC and provides a critical bridge between the FA complex and FANCD2. The chain is Fanconi anemia group E protein (FANCE) from Homo sapiens (Human).